A 96-amino-acid chain; its full sequence is MSRISVENVKHVAHLARLAITDQEAEKFQKQLDAIVTFAEQLNELDTTDVKPTTHVLTMKNVMREDVPEKGLPVEEVLKNAPDHKDNQIRVPAVLE.

It belongs to the GatC family. Heterotrimer of A, B and C subunits.

The catalysed reaction is L-glutamyl-tRNA(Gln) + L-glutamine + ATP + H2O = L-glutaminyl-tRNA(Gln) + L-glutamate + ADP + phosphate + H(+). It carries out the reaction L-aspartyl-tRNA(Asn) + L-glutamine + ATP + H2O = L-asparaginyl-tRNA(Asn) + L-glutamate + ADP + phosphate + 2 H(+). Its function is as follows. Allows the formation of correctly charged Asn-tRNA(Asn) or Gln-tRNA(Gln) through the transamidation of misacylated Asp-tRNA(Asn) or Glu-tRNA(Gln) in organisms which lack either or both of asparaginyl-tRNA or glutaminyl-tRNA synthetases. The reaction takes place in the presence of glutamine and ATP through an activated phospho-Asp-tRNA(Asn) or phospho-Glu-tRNA(Gln). The chain is Aspartyl/glutamyl-tRNA(Asn/Gln) amidotransferase subunit C from Bacillus anthracis (strain A0248).